Here is a 141-residue protein sequence, read N- to C-terminus: HTH-type transcriptional repressor NsrR (141 aa).

In terms of domain architecture, HTH rrf2-type spans 2-129 (QLTSFTDYAL…DDCSIAELLD (128 aa)). Residues 28–51 (ITDVTELFGVSRNHMVKVINRLGQ) constitute a DNA-binding region (H-T-H motif). Cys91, Cys96, and Cys102 together coordinate [2Fe-2S] cluster.

It depends on [2Fe-2S] cluster as a cofactor.

In terms of biological role, nitric oxide-sensitive repressor of genes involved in protecting the cell against nitrosative stress. May require iron for activity. The sequence is that of HTH-type transcriptional repressor NsrR from Vibrio vulnificus (strain CMCP6).